Consider the following 540-residue polypeptide: Suppressor of tumorigenicity 7 protein-like (540 aa).

4 consecutive transmembrane segments (helical) span residues 24 to 44, 68 to 88, 475 to 495, and 502 to 522; these read WSWT…VYVL, FYVA…IFEW, LPFF…LAML, and LMGV…GFFA.

Belongs to the ST7 family.

It localises to the membrane. The chain is Suppressor of tumorigenicity 7 protein-like (st7l) from Danio rerio (Zebrafish).